We begin with the raw amino-acid sequence, 210 residues long: SAP domain-containing ribonucleoprotein (210 aa).

An N-acetylalanine modification is found at Ala2. The 35-residue stretch at 8-42 (LHKLKLAELKQECLARGLETKGIKQDLIHRLQAYL) folds into the SAP domain. Position 10 is an N6-acetyllysine (Lys10). Residues 45–64 (HAEEEANEEDVLGDETEEEE) show a composition bias toward acidic residues. A disordered region spans residues 45–86 (HAEEEANEEDVLGDETEEEETKPIELPVKEEEPPEKTVDVAA). The span at 65–86 (TKPIELPVKEEEPPEKTVDVAA) shows a compositional bias: basic and acidic residues. Lys142 is subject to N6-acetyllysine. The tract at residues 161-210 (VSSISRKSEDDEKLKKRKERFGIVTSSAGTGTTEDTEAKKRKRAERFGIA) is disordered. Ser163 is subject to Phosphoserine. The span at 184-193 (VTSSAGTGTT) shows a compositional bias: polar residues.

It belongs to the SAP domain-containing ribonucleoprotein family. As to quaternary structure, interacts with DDX39A. Interacts with FUS. Interacts (via the C-terminal domain) with DDX39B; the interaction is direct and facilitates RNA binding of DDX39B. Component of the transcription/export (TREX) complex at least composed of ALYREF/THOC4, DDX39B, SARNP/CIP29, CHTOP and the THO subcomplex; TREX seems to have dynamic structure involving ATP-dependent remodeling; in the complex interacts directly with DDX39B in a ATP-dependent manner which bridges it to ALYREF/THOC4. As to expression, low expression in spleen, liver, pancreas, testis, thymus, heart, and kidney. Increased levels are seen in hepatocellular carcinoma and pancreatic adenocarcinoma.

Its subcellular location is the nucleus. The protein resides in the nucleus speckle. Its function is as follows. Binds both single-stranded and double-stranded DNA with higher affinity for the single-stranded form. Specifically binds to scaffold/matrix attachment region DNA. Also binds single-stranded RNA. Enhances RNA unwinding activity of DDX39A. May participate in important transcriptional or translational control of cell growth, metabolism and carcinogenesis. Component of the TREX complex which is thought to couple mRNA transcription, processing and nuclear export, and specifically associates with spliced mRNA and not with unspliced pre-mRNA. The TREX complex is recruited to spliced mRNAs by a transcription-independent mechanism, binds to mRNA upstream of the exon-junction complex (EJC) and is recruited in a splicing- and cap-dependent manner to a region near the 5' end of the mRNA where it functions in mRNA export to the cytoplasm via the TAP/NXF1 pathway. Associates with DDX39B, which facilitates RNA binding of DDX39B and likely plays a role in mRNA export. The sequence is that of SAP domain-containing ribonucleoprotein (SARNP) from Homo sapiens (Human).